Consider the following 252-residue polypeptide: Probable transcriptional regulatory protein TW504 (252 aa).

This sequence belongs to the TACO1 family.

The protein resides in the cytoplasm. In Tropheryma whipplei (strain TW08/27) (Whipple's bacillus), this protein is Probable transcriptional regulatory protein TW504.